A 356-amino-acid polypeptide reads, in one-letter code: OVARIAN TUMOR DOMAIN-containing deubiquitinating enzyme 10 (356 aa).

The interval 86–117 (DYSHQNQQQQHQQEGYTNNYSNNNNGYAWNDQ) is disordered. Low complexity predominate over residues 89 to 115 (HQNQQQQHQQEGYTNNYSNNNNGYAWN). One can recognise an OTU domain in the interval 213-337 (FTEVKVPGDG…EVHYNAIYLN (125 aa)). D221 is a catalytic residue. Residue C224 is the Nucleophile of the active site. The active site involves H330.

It belongs to the peptidase C85 family.

It carries out the reaction Thiol-dependent hydrolysis of ester, thioester, amide, peptide and isopeptide bonds formed by the C-terminal Gly of ubiquitin (a 76-residue protein attached to proteins as an intracellular targeting signal).. In terms of biological role, hydrolase that can remove conjugated ubiquitin from proteins in vitro and may therefore play an important regulatory role at the level of protein turnover by preventing degradation. Cysteine protease with a preference for 'Lys-63' over 'Lys-48' over 'Met-1' -linked ubiquitin (UB) tetramers as substrates. Also cleaves RUB-GST fusion. The polypeptide is OVARIAN TUMOR DOMAIN-containing deubiquitinating enzyme 10 (Arabidopsis thaliana (Mouse-ear cress)).